Consider the following 306-residue polypeptide: MSKKIKCALIGPGNIGTDLLYKLRRSPVLDPVWMVGVDPTSEGLKRARELGLKTTEQGVDGLLPHVLADGVQIAFDATSAYVHAENSRRLTELGVLVIDLTPAAIGPFCVPPVNLLALVGRRVMNVNMVTCGGQATIPMIAAISRVQPVRYGEIVATISSKSAGPGTRKNIDEFTRTTSRAIEQVGGAAKGKAIIIINPAEPPLVMRDTVHCLTETEPDQAKITASIHAMIKEVQKYVPGYKLVNGPVFDDKRVSVFLEVEGLGDFLPKYSGNLDIMTAAAARTAEMFAEEILAGRINLQPMATVA.

Cys-131 serves as the catalytic Acyl-thioester intermediate. NAD(+) contacts are provided by residues 162-170 and Asn-273; that span reads SAGPGTRKN.

Belongs to the acetaldehyde dehydrogenase family.

It carries out the reaction acetaldehyde + NAD(+) + CoA = acetyl-CoA + NADH + H(+). In Albidiferax ferrireducens (strain ATCC BAA-621 / DSM 15236 / T118) (Rhodoferax ferrireducens), this protein is Acetaldehyde dehydrogenase.